The chain runs to 59 residues: Light-harvesting protein B-800-850 alpha chain E (59 aa).

Topologically, residues 1 to 11 (MNQGRIWTVVK) are cytoplasmic. Residues 12 to 35 (PTVGLPLLLGSVTVIAILVHFAVL) traverse the membrane as a helical segment. Histidine 31 contributes to the a bacteriochlorophyll binding site. The Periplasmic portion of the chain corresponds to 36–59 (SNTTWFSKYWNGKAAAIESSVSIG).

This sequence belongs to the antenna complex alpha subunit family. The core complex is formed by different alpha and beta chains, binding bacteriochlorophyll molecules, and arranged most probably in tetrameric structures disposed around the reaction center. The non-pigmented gamma chains may constitute additional components.

The protein resides in the cell inner membrane. Its function is as follows. Antenna complexes are light-harvesting systems, which transfer the excitation energy to the reaction centers. The protein is Light-harvesting protein B-800-850 alpha chain E (pucAE) of Rhodopseudomonas palustris (strain ATCC BAA-98 / CGA009).